Reading from the N-terminus, the 223-residue chain is Serine/threonine/tyrosine-interacting protein (223 aa).

The region spanning 28 to 176 (EMQEILPGLF…LQEYEAIYLA (149 aa)) is the Tyrosine-protein phosphatase domain. The Interaction with FBXW7 signature appears at 76–78 (FQQ). A phosphoserine mark is found at Ser184, Ser193, and Ser201. The tract at residues 197-223 (GTTGSLKRTHEEEDDFGTMQVATAQNG) is disordered.

The protein belongs to the protein-tyrosine phosphatase family. Non-receptor class subfamily. In terms of assembly, interacts with MAPK1; independently of MAPK1 phosphorylation status. Interacts with CARHSP1/Crhsp-24. Interacts (via FQQ motif) with FBXW7 isoforms 1 (via F-box domain) and 3 (via F-box domain); the interaction is direct and prevents FBXW7 interaction with SKP1, a component of the SCF(FBXW7) complex. Does not interact with FBXW7 isoform 2.

The protein localises to the nucleus. Its subcellular location is the cytoplasm. The protein resides in the cytosol. Catalytically inactive phosphatase. Acts as a nuclear anchor for MAPK1/MAPK3 (ERK1/ERK2). Modulates cell-fate decisions and cell migration by spatiotemporal regulation of MAPK1/MAPK3 (ERK1/ERK2). By binding to the F-box of FBXW7, prevents the assembly of FBXW7 into the SCF E3 ubiquitin-protein ligase complex, and thereby inhibits degradation of its substrates. Plays a role in spermatogenesis. In Homo sapiens (Human), this protein is Serine/threonine/tyrosine-interacting protein.